A 206-amino-acid polypeptide reads, in one-letter code: Large ribosomal subunit protein uL4 (206 aa).

The interval 51–76 (AKTRAEVSGGGIKPWRQKGTGRARQG) is disordered.

This sequence belongs to the universal ribosomal protein uL4 family. In terms of assembly, part of the 50S ribosomal subunit.

Its function is as follows. One of the primary rRNA binding proteins, this protein initially binds near the 5'-end of the 23S rRNA. It is important during the early stages of 50S assembly. It makes multiple contacts with different domains of the 23S rRNA in the assembled 50S subunit and ribosome. In terms of biological role, forms part of the polypeptide exit tunnel. The polypeptide is Large ribosomal subunit protein uL4 (Clostridium kluyveri (strain ATCC 8527 / DSM 555 / NBRC 12016 / NCIMB 10680 / K1)).